The sequence spans 279 residues: MLLLVTLALLAGPTCRAQNILGNNVGTYFYVAGEEHGQLRGIRIFLTVIDLIKGIQLRFGGNWSDVYGSRSLKYKEFLLEDGEHVTQVSGTRKLCLTSLSFTTNKGRVVTFGVRRGLSFNESGGSDKYLVTVNGLYAPGLCLNGMGFKWKNIHDDFDDNDDDKEDDDDEHDDDNEEDHGDKDNDNDHDDDHDDDDDDKEDDNEEDVDDERDDKDDDEEDDDNDKENDKDDGEGSGDDDDNDDEDDDKDDDGGSGDDGDDGDDDEDDDGGDDDNGDEEEE.

Positions 1 to 17 (MLLLVTLALLAGPTCRA) are cleaved as a signal peptide. At Gln-18 the chain carries Pyrrolidone carboxylic acid. One can recognise a Jacalin-type lectin domain in the interval 18-151 (QNILGNNVGT…LNGMGFKWKN (134 aa)). Residue Asn-62 is glycosylated (N-linked (GlcNAc...) asparagine). Composition is skewed to acidic residues over residues 160–177 (DDDKEDDDDEHDDDNEED) and 185–279 (NDHD…EEEE). Positions 160-279 (DDDKEDDDDE…DDDNGDEEEE (120 aa)) are disordered.

It to mouse SBP. Prostate.

Functionally, spermine-binding protein is an androgen regulated ventral prostate glycoprotein that binds various polyamines. This chain is Prostatic spermine-binding protein (Sbp), found in Rattus norvegicus (Rat).